The following is a 397-amino-acid chain: Ubiquitin-like modifier-activating enzyme 5 (397 aa).

Positions 77, 98, 121, 144, and 178 each coordinate ATP. Zn(2+) is bound by residues C220 and C223. Residue C244 is the Glycyl thioester intermediate of the active site. Residues C297 and C302 each contribute to the Zn(2+) site. The UFM1-interacting sequence (UIS) signature appears at 329–341 (VVHEDNDWGIELV). The tract at residues 342–372 (SEVSEEELKAASGPVPDLPEGIKVAYTIPIT) is linker. The UFC1-binding sequence (UFC) motif lies at 382-397 (DSEQSLDELMAQMKNL).

This sequence belongs to the ubiquitin-activating E1 family. UBA5 subfamily. Homodimer; homodimerization is required for ufm1 activation. Interacts (via UIS motif) with ufm1; binds ufm1 via a trans-binding mechanism in which ufm1 interacts with distinct sites in both subunits of the uba5 homodimer. Interacts (via C-terminus) with ufc1.

The protein localises to the cytoplasm. It localises to the nucleus. Its subcellular location is the endoplasmic reticulum membrane. The protein resides in the golgi apparatus. Functionally, E1-like enzyme which specifically catalyzes the first step in ufmylation. Activates ufm1 by first adenylating its C-terminal glycine residue with ATP, and thereafter linking this residue to the side chain of a cysteine residue in E1, yielding a ufm1-E1 thioester and free AMP. Activates ufm1 via a trans-binding mechanism, in which ufm1 interacts with distinct sites in both subunits of the uba5 homodimer. Trans-binding also promotes stabilization of the uba5 homodimer, and enhances ATP-binding. Transfer of ufm1 from uba5 to the E2-like enzyme UFC1 also takes place using a trans mechanism. Ufmylation plays a key role in various processes, such as ribosome recycling, response to DNA damage, interferon response or reticulophagy (also called ER-phagy). This Xenopus laevis (African clawed frog) protein is Ubiquitin-like modifier-activating enzyme 5.